Consider the following 466-residue polypeptide: Vacuolar-processing enzyme delta-isozyme (466 aa).

A signal peptide spans 1 to 24; sequence MSSPLGHFQILVFLHALLIFSAES. N-linked (GlcNAc...) asparagine glycosylation is present at Asn-137. Residue His-164 is part of the active site. The Nucleophile role is filled by Cys-206. A disulfide bond links Cys-239 and Cys-253. Asn-322 carries an N-linked (GlcNAc...) asparagine glycan. Intrachain disulfides connect Cys-417–Cys-447 and Cys-429–Cys-464.

Belongs to the peptidase C13 family. In terms of processing, auto-catalytic activation. In terms of tissue distribution, seed specific. Restricted to developing seeds at 7 days after anthesis, and, at lower levels, detected in flowers. Detected in siliques, specifically in seed coats (at protein level).

The protein resides in the secreted. It localises to the extracellular space. The protein localises to the cell wall. It is found in the vacuole. The enzyme catalyses Hydrolysis of proteins and small molecule substrates at -Asn-|-Xaa- bonds.. Its activity is regulated as follows. Strongly inhibited by biotin-YVAD-fmk (a caspase-1 inhibitor) and by Ac-DEVD-fmk. Its function is as follows. Asparagine-specific endopeptidase that may be involved in processing of proteins targeted to vacuoles. Probably involved in post-translational proteolysis of seed storage proteins in the protein storage vacuole of developing seeds. Exhibits a caspase-1-like activity in extracellular granules. At the early stage of seed development, required for the formation of the seed coat, by regulating cell death of specific cell layers in inner integument. The polypeptide is Vacuolar-processing enzyme delta-isozyme (Arabidopsis thaliana (Mouse-ear cress)).